Reading from the N-terminus, the 94-residue chain is DNA-directed RNA polymerase subunit omega (94 aa).

This sequence belongs to the RNA polymerase subunit omega family. In terms of assembly, the RNAP catalytic core consists of 2 alpha, 1 beta, 1 beta' and 1 omega subunit. When a sigma factor is associated with the core the holoenzyme is formed, which can initiate transcription.

The catalysed reaction is RNA(n) + a ribonucleoside 5'-triphosphate = RNA(n+1) + diphosphate. Promotes RNA polymerase assembly. Latches the N- and C-terminal regions of the beta' subunit thereby facilitating its interaction with the beta and alpha subunits. The polypeptide is DNA-directed RNA polymerase subunit omega (Tolumonas auensis (strain DSM 9187 / NBRC 110442 / TA 4)).